The sequence spans 1488 residues: Chromosome partition protein MukB (1488 aa).

34–41 contacts ATP; that stretch reads GGNGAGKS. 3 coiled-coil regions span residues 326-418, 444-472, and 509-602; these read LEAD…QYNQ, LDTFQAKEQEATEKLLSLEQKMSVAQTAH, and RHLA…RRAP. Positions 666 to 783 are flexible hinge; it reads PGGAEDQRLN…SLPIFGRAAR (118 aa). Coiled-coil stretches lie at residues 835–923, 977–1116, and 1209–1265; these read EAEI…AKLE, EMLS…AKAG, and VEAI…LQSV. A disordered region spans residues 1049–1074; that stretch reads ADSGAEERARQRRDELHAQLSNNRSR. Basic and acidic residues predominate over residues 1051-1065; it reads SGAEERARQRRDELH.

Belongs to the SMC family. MukB subfamily. Homodimerization via its hinge domain. Binds to DNA via its C-terminal region. Interacts, and probably forms a ternary complex, with MukE and MukF via its C-terminal region. The complex formation is stimulated by calcium or magnesium. Interacts with tubulin-related protein FtsZ.

The protein localises to the cytoplasm. It localises to the nucleoid. In terms of biological role, plays a central role in chromosome condensation, segregation and cell cycle progression. Functions as a homodimer, which is essential for chromosome partition. Involved in negative DNA supercoiling in vivo, and by this means organize and compact chromosomes. May achieve or facilitate chromosome segregation by condensation DNA from both sides of a centrally located replisome during cell division. The protein is Chromosome partition protein MukB of Salmonella agona (strain SL483).